A 159-amino-acid polypeptide reads, in one-letter code: 3-dehydroquinate dehydratase (159 aa).

The active-site Proton acceptor is the Tyr-31. Asn-82, His-88, and Asp-95 together coordinate substrate. His-109 serves as the catalytic Proton donor. Residues 110–111 and Arg-120 each bind substrate; that span reads IS.

It belongs to the type-II 3-dehydroquinase family. Homododecamer.

The catalysed reaction is 3-dehydroquinate = 3-dehydroshikimate + H2O. It participates in metabolic intermediate biosynthesis; chorismate biosynthesis; chorismate from D-erythrose 4-phosphate and phosphoenolpyruvate: step 3/7. Its function is as follows. Catalyzes a trans-dehydration via an enolate intermediate. The protein is 3-dehydroquinate dehydratase of Streptomyces avermitilis (strain ATCC 31267 / DSM 46492 / JCM 5070 / NBRC 14893 / NCIMB 12804 / NRRL 8165 / MA-4680).